We begin with the raw amino-acid sequence, 55 residues long: Large ribosomal subunit protein bL33 (55 aa).

It belongs to the bacterial ribosomal protein bL33 family.

The polypeptide is Large ribosomal subunit protein bL33 (Rhodopseudomonas palustris (strain BisB18)).